The chain runs to 124 residues: S-adenosylmethionine decarboxylase proenzyme (124 aa).

Ser63 acts as the Schiff-base intermediate with substrate; via pyruvic acid in catalysis. Ser63 is modified (pyruvic acid (Ser); by autocatalysis). The active-site Proton acceptor; for processing activity is the His68. Catalysis depends on Cys83, which acts as the Proton donor; for catalytic activity.

The protein belongs to the prokaryotic AdoMetDC family. Type 1 subfamily. Heterotetramer of two alpha and two beta chains arranged as a dimer of alpha/beta heterodimers. Requires pyruvate as cofactor. Post-translationally, is synthesized initially as an inactive proenzyme. Formation of the active enzyme involves a self-maturation process in which the active site pyruvoyl group is generated from an internal serine residue via an autocatalytic post-translational modification. Two non-identical subunits are generated from the proenzyme in this reaction, and the pyruvate is formed at the N-terminus of the alpha chain, which is derived from the carboxyl end of the proenzyme. The post-translation cleavage follows an unusual pathway, termed non-hydrolytic serinolysis, in which the side chain hydroxyl group of the serine supplies its oxygen atom to form the C-terminus of the beta chain, while the remainder of the serine residue undergoes an oxidative deamination to produce ammonia and the pyruvoyl group blocking the N-terminus of the alpha chain.

The enzyme catalyses S-adenosyl-L-methionine + H(+) = S-adenosyl 3-(methylsulfanyl)propylamine + CO2. It participates in amine and polyamine biosynthesis; S-adenosylmethioninamine biosynthesis; S-adenosylmethioninamine from S-adenosyl-L-methionine: step 1/1. Its function is as follows. Catalyzes the decarboxylation of S-adenosylmethionine to S-adenosylmethioninamine (dcAdoMet), the propylamine donor required for the synthesis of the polyamines spermine and spermidine from the diamine putrescine. The sequence is that of S-adenosylmethionine decarboxylase proenzyme from Caldicellulosiruptor bescii (strain ATCC BAA-1888 / DSM 6725 / KCTC 15123 / Z-1320) (Anaerocellum thermophilum).